A 383-amino-acid polypeptide reads, in one-letter code: Protein delta homolog 1 (383 aa).

The first 23 residues, 1 to 23, serve as a signal peptide directing secretion; it reads MIATGALLRVLLLLLAFGHSTYG. EGF-like domains lie at 24-55, 59-86, 88-125, 127-168, 170-206, and 208-245; these read AECDPACDPQHGFCEADNVCRCEPGWEGPLCE, TSPGCVNGLCEEPWQCVCKEGWDGKFCE, DIRACTSTPCANNGTCVDLEKGQYECSCTPGFSGKDCQ, KAGP…NFCE, VTNSCTPNPCENDGVCTDIGGDFRCRCPAGFVDKTCS, and PVSNCASGPCLNGGTCLQHTQVSFECLCKPPFMGPTCA. Residues 24–306 are Extracellular-facing; the sequence is AECDPACDPQ…PLLTEGQAIC (283 aa). Intrachain disulfides connect Cys-26–Cys-37, Cys-30–Cys-43, Cys-45–Cys-54, Cys-63–Cys-68, Cys-76–Cys-85, Cys-92–Cys-103, Cys-97–Cys-113, Cys-115–Cys-124, Cys-131–Cys-144, Cys-138–Cys-156, Cys-158–Cys-167, Cys-174–Cys-185, Cys-179–Cys-194, Cys-196–Cys-205, Cys-212–Cys-223, Cys-217–Cys-233, and Cys-235–Cys-244. Residues 307 to 327 traverse the membrane as a helical segment; it reads FTILGVLTSLVVLGTVAIVFL. Over 328 to 383 the chain is Cytoplasmic; sequence NKCEAWVSNLRYNHMLRKKKNLLLQYNSGEELAVNIIFPEKIDMTTFNKEAGDEDI.

As to quaternary structure, monomer. Interacts with SH3RF2. In terms of processing, glycosylated. As to expression, pancreas and adrenal glands (at protein level).

The protein resides in the membrane. It localises to the cytoplasm. May have a role in neuroendocrine differentiation. Inhibits adipocyte differentiation. The sequence is that of Protein delta homolog 1 (Dlk1) from Rattus norvegicus (Rat).